Consider the following 190-residue polypeptide: Small ribosomal subunit protein mS23 (190 aa).

Ala-2 carries the post-translational modification N-acetylalanine. At Lys-102 the chain carries N6-acetyllysine. The interval 139-190 (RTQHGGSHVSRKSEHLSVRPQTALEENETQKEVPQDQHLEAPADQSKGLLPP) is disordered. Residues 166–179 (ETQKEVPQDQHLEA) show a composition bias toward basic and acidic residues.

The protein belongs to the mitochondrion-specific ribosomal protein mS23 family. Component of the mitochondrial small ribosomal subunit (mt-SSU). Mature mammalian 55S mitochondrial ribosomes consist of a small (28S) and a large (39S) subunit. The 28S small subunit contains a 12S ribosomal RNA (12S mt-rRNA) and 30 different proteins. The 39S large subunit contains a 16S rRNA (16S mt-rRNA), a copy of mitochondrial valine transfer RNA (mt-tRNA(Val)), which plays an integral structural role, and 52 different proteins.

It localises to the mitochondrion. The protein is Small ribosomal subunit protein mS23 (MRPS23) of Homo sapiens (Human).